Here is a 139-residue protein sequence, read N- to C-terminus: Gonadotropin subunit beta-2 (139 aa).

Residues 1–24 (MFPLVLSLFLGATSDIWPLAPAEA) form the signal peptide. 6 disulfides stabilise this stretch: C30-C78, C44-C93, C47-C131, C55-C109, C59-C111, and C114-C121. N-linked (GlcNAc...) asparagine glycosylation is present at N34.

The protein belongs to the glycoprotein hormones subunit beta family. Heterodimer of an alpha and a beta chain.

The protein resides in the secreted. In terms of biological role, involved in gametogenesis and steroidogenesis. The protein is Gonadotropin subunit beta-2 (cgbb) of Morone saxatilis (Striped bass).